A 316-amino-acid polypeptide reads, in one-letter code: 4-hydroxy-3-methylbut-2-enyl diphosphate reductase (316 aa).

A [4Fe-4S] cluster-binding site is contributed by Cys12. Residues His43 and His81 each coordinate (2E)-4-hydroxy-3-methylbut-2-enyl diphosphate. Residues His43 and His81 each contribute to the dimethylallyl diphosphate site. Isopentenyl diphosphate-binding residues include His43 and His81. Cys103 contributes to the [4Fe-4S] cluster binding site. His131 contributes to the (2E)-4-hydroxy-3-methylbut-2-enyl diphosphate binding site. His131 lines the dimethylallyl diphosphate pocket. His131 serves as a coordination point for isopentenyl diphosphate. Residue Glu133 is the Proton donor of the active site. Thr170 contacts (2E)-4-hydroxy-3-methylbut-2-enyl diphosphate. Cys198 contributes to the [4Fe-4S] cluster binding site. (2E)-4-hydroxy-3-methylbut-2-enyl diphosphate is bound by residues Ser226, Asn228, and Ser271. Residues Ser226, Asn228, and Ser271 each contribute to the dimethylallyl diphosphate site. Ser226, Asn228, and Ser271 together coordinate isopentenyl diphosphate.

It belongs to the IspH family. Requires [4Fe-4S] cluster as cofactor.

The catalysed reaction is isopentenyl diphosphate + 2 oxidized [2Fe-2S]-[ferredoxin] + H2O = (2E)-4-hydroxy-3-methylbut-2-enyl diphosphate + 2 reduced [2Fe-2S]-[ferredoxin] + 2 H(+). The enzyme catalyses dimethylallyl diphosphate + 2 oxidized [2Fe-2S]-[ferredoxin] + H2O = (2E)-4-hydroxy-3-methylbut-2-enyl diphosphate + 2 reduced [2Fe-2S]-[ferredoxin] + 2 H(+). The protein operates within isoprenoid biosynthesis; dimethylallyl diphosphate biosynthesis; dimethylallyl diphosphate from (2E)-4-hydroxy-3-methylbutenyl diphosphate: step 1/1. Its pathway is isoprenoid biosynthesis; isopentenyl diphosphate biosynthesis via DXP pathway; isopentenyl diphosphate from 1-deoxy-D-xylulose 5-phosphate: step 6/6. Its function is as follows. Catalyzes the conversion of 1-hydroxy-2-methyl-2-(E)-butenyl 4-diphosphate (HMBPP) into a mixture of isopentenyl diphosphate (IPP) and dimethylallyl diphosphate (DMAPP). Acts in the terminal step of the DOXP/MEP pathway for isoprenoid precursor biosynthesis. The chain is 4-hydroxy-3-methylbut-2-enyl diphosphate reductase from Bacillus cereus (strain B4264).